The chain runs to 435 residues: Glutamine synthetase (435 aa).

In terms of domain architecture, GS beta-grasp spans 12 to 94 (KGVKYFMISY…VAADCIMDDA (83 aa)). Residues 100-435 (PRVVLKKLVA…EWEHQTTLDV (336 aa)) form the GS catalytic domain. Positions 123, 125, 180, and 187 each coordinate Mg(2+). G232 is an L-glutamate binding site. Residue H236 participates in Mg(2+) binding. S240 is an ATP binding site. Positions 291 and 315 each coordinate L-glutamate. Positions 315 and 320 each coordinate ATP. E328 is a binding site for Mg(2+). Residue R330 participates in L-glutamate binding.

It belongs to the glutamine synthetase family. In terms of assembly, homooctamer. Requires Mg(2+) as cofactor.

The catalysed reaction is L-glutamate + NH4(+) + ATP = L-glutamine + ADP + phosphate + H(+). With respect to regulation, inhibited by methionine sulfoximine, ADP and pyrophosphate, but not by various nitrogen-containing metabolites that inhibit other GS enzymes. In terms of biological role, catalyzes the ATP-dependent biosynthesis of glutamine from glutamate and ammonia. The chain is Glutamine synthetase from Rhizobium meliloti (strain 1021) (Ensifer meliloti).